The chain runs to 254 residues: MTPAFELQGVQFAYKGVPALNGLDLTLPLGRRTALLGANGSGKSTLLRLLDGLQFPAAGRISAFGTPLTEAMFTDEAAAIAFRRRVGFVFQNPEVQLFCPSVFDELAFGPLQLHWPKERIRARVARAIAQFGLGPLAGRPPHRLSGGEKKRVALASVLILDPEVLLLDEPTAALDPQATDDIAALLETEFGARNPGRTLIFSSHDLDLVARIADHVVVLEAGKVAAAGPAAEVLARTALLRRARLLPGFDGTAP.

The 242-residue stretch at 5 to 246 (FELQGVQFAY…TALLRRARLL (242 aa)) folds into the ABC transporter domain. 37-44 (GANGSGKS) serves as a coordination point for ATP.

This sequence belongs to the ABC transporter superfamily. In terms of assembly, forms an energy-coupling factor (ECF) transporter complex composed of an ATP-binding protein (A component, NikO), a transmembrane protein (T component, NikQ) and a fused possible substrate-capture protein (S component, NikMN) of unknown stoichimetry.

The protein localises to the cell inner membrane. The enzyme catalyses Ni(2+)(out) + ATP + H2O = Ni(2+)(in) + ADP + phosphate + H(+). Part of the energy-coupling factor (ECF) transporter complex NikMNQO involved in nickel import. The complex confers nickel uptake upon expression in E.coli. Shows very low activity with cobalt. Presumably responsible for energy coupling to the transport system. The chain is Nickel import ATP-binding protein NikO from Rhodobacter capsulatus (strain ATCC BAA-309 / NBRC 16581 / SB1003).